The primary structure comprises 564 residues: Dihydropyrimidinase-related protein 5 (564 aa).

2 positions are modified to phosphothreonine: Thr-509 and Thr-514. Phosphoserine is present on residues Ser-532 and Ser-538. Position 559 is an omega-N-methylarginine (Arg-559).

Belongs to the metallo-dependent hydrolases superfamily. Hydantoinase/dihydropyrimidinase family. As to quaternary structure, homotetramer, and heterotetramer with other DPYS-like proteins. Interacts with DPYSL2, DPYSL3 and DPYSL4. Interacts with MAP2 and TUBB3. In terms of tissue distribution, highly expressed in embryonic and early postnatal brain and spinal cord.

The protein resides in the cytoplasm. In terms of biological role, involved in the negative regulation of dendrite outgrowth. This chain is Dihydropyrimidinase-related protein 5 (Dpysl5), found in Rattus norvegicus (Rat).